A 303-amino-acid chain; its full sequence is ATP synthase gamma chain (303 aa).

It belongs to the ATPase gamma chain family. In terms of assembly, F-type ATPases have 2 components, CF(1) - the catalytic core - and CF(0) - the membrane proton channel. CF(1) has five subunits: alpha(3), beta(3), gamma(1), delta(1), epsilon(1). CF(0) has three main subunits: a, b and c.

Its subcellular location is the cell membrane. In terms of biological role, produces ATP from ADP in the presence of a proton gradient across the membrane. The gamma chain is believed to be important in regulating ATPase activity and the flow of protons through the CF(0) complex. The chain is ATP synthase gamma chain from Oenococcus oeni (strain ATCC BAA-331 / PSU-1).